A 351-amino-acid chain; its full sequence is Homeobox-leucine zipper protein HOX23 (351 aa).

The segment at 34 to 128 (LQDHAHGGHG…SFESGNKLEP (95 aa)) is disordered. Positions 56-65 (SPFLPDLAMD) are enriched in low complexity. Residues 101 to 160 (GGEKKRRLSVEQVRTLERSFESGNKLEPERKAQLARALGLQPRQVAIWFQNRRARWKTKQ) constitute a DNA-binding region (homeobox). Residues 114-128 (RTLERSFESGNKLEP) show a composition bias toward basic and acidic residues. The tract at residues 159 to 203 (KQLEKDFDALRRQLDAARAENDALLSLNSKLHAEIVALKGGAAAA) is leucine-zipper. The disordered stretch occupies residues 227–263 (EASCSNRSENSSEINLDISRPAPPPPPPPANESPVNR). The segment covering 228–240 (ASCSNRSENSSEI) has biased composition (polar residues). A compositionally biased stretch (pro residues) spans 247–257 (PAPPPPPPPAN).

Belongs to the HD-ZIP homeobox family. Class I subfamily. In terms of tissue distribution, expressed in seedlings, roots, stems, leaf sheaths and panicles.

It is found in the nucleus. Functionally, probable transcription factor. The polypeptide is Homeobox-leucine zipper protein HOX23 (HOX23) (Oryza sativa subsp. indica (Rice)).